A 476-amino-acid polypeptide reads, in one-letter code: Ribosomal protein uS12 methylthiotransferase RimO (476 aa).

Positions 33 to 143 (NRIGFVSLGC…VLKHVHKYVP (111 aa)) constitute an MTTase N-terminal domain. [4Fe-4S] cluster-binding residues include C42, C78, C107, C175, C179, and C182. The region spanning 161 to 398 (LTPKHYAYLK…MEVQAEISAE (238 aa)) is the Radical SAM core domain. Positions 401–467 (ARFVGRTMDI…EHDLWAELVD (67 aa)) constitute a TRAM domain.

It belongs to the methylthiotransferase family. RimO subfamily. It depends on [4Fe-4S] cluster as a cofactor.

The protein localises to the cytoplasm. The enzyme catalyses L-aspartate(89)-[ribosomal protein uS12]-hydrogen + (sulfur carrier)-SH + AH2 + 2 S-adenosyl-L-methionine = 3-methylsulfanyl-L-aspartate(89)-[ribosomal protein uS12]-hydrogen + (sulfur carrier)-H + 5'-deoxyadenosine + L-methionine + A + S-adenosyl-L-homocysteine + 2 H(+). In terms of biological role, catalyzes the methylthiolation of an aspartic acid residue of ribosomal protein uS12. This Shewanella sp. (strain MR-4) protein is Ribosomal protein uS12 methylthiotransferase RimO.